Here is a 270-residue protein sequence, read N- to C-terminus: Molybdenum storage protein subunit beta (270 aa).

As to quaternary structure, octamer consisting of 4 alpha and 4 beta chains.

Its subcellular location is the cytoplasm. Its function is as follows. Intracellular storage of molybdenum. Binds polyoxomolybdates. Can bind at least 90 molybdenum atoms per protein molecule. The chain is Molybdenum storage protein subunit beta from Azotobacter vinelandii (strain DJ / ATCC BAA-1303).